The following is a 150-amino-acid chain: Ribonuclease H (150 aa).

One can recognise an RNase H type-1 domain in the interval 7 to 148 (ESNIVEIWTD…ADQLATKARM (142 aa)). The Mg(2+) site is built by Asp-16, Glu-54, Asp-76, and Asp-140.

This sequence belongs to the RNase H family. As to quaternary structure, monomer. The cofactor is Mg(2+).

The protein resides in the cytoplasm. It carries out the reaction Endonucleolytic cleavage to 5'-phosphomonoester.. Its function is as follows. Endonuclease that specifically degrades the RNA of RNA-DNA hybrids. This Granulibacter bethesdensis (strain ATCC BAA-1260 / CGDNIH1) protein is Ribonuclease H.